The sequence spans 347 residues: Heme A synthase (347 aa).

Helical transmembrane passes span 14–34 (VKVW…VGGI), 95–115 (YFHR…FLYF), 125–145 (LIVN…MGWL), 166–186 (LLLA…AVIL), 198–218 (LIFY…SLVA), 260–280 (FIHE…LLIL), 289–309 (LLLV…IYNV), and 311–331 (IALA…NTYL). Residue histidine 262 coordinates heme. Histidine 317 contributes to the heme binding site.

The protein belongs to the COX15/CtaA family. Type 2 subfamily. In terms of assembly, interacts with CtaB. Heme b is required as a cofactor.

The protein localises to the cell membrane. It catalyses the reaction Fe(II)-heme o + 2 A + H2O = Fe(II)-heme a + 2 AH2. It functions in the pathway porphyrin-containing compound metabolism; heme A biosynthesis; heme A from heme O: step 1/1. Catalyzes the conversion of heme O to heme A by two successive hydroxylations of the methyl group at C8. The first hydroxylation forms heme I, the second hydroxylation results in an unstable dihydroxymethyl group, which spontaneously dehydrates, resulting in the formyl group of heme A. The protein is Heme A synthase of Ehrlichia canis (strain Jake).